The following is a 95-amino-acid chain: Co-chaperonin GroES (95 aa).

This sequence belongs to the GroES chaperonin family. As to quaternary structure, heptamer of 7 subunits arranged in a ring. Interacts with the chaperonin GroEL.

It localises to the cytoplasm. Functionally, together with the chaperonin GroEL, plays an essential role in assisting protein folding. The GroEL-GroES system forms a nano-cage that allows encapsulation of the non-native substrate proteins and provides a physical environment optimized to promote and accelerate protein folding. GroES binds to the apical surface of the GroEL ring, thereby capping the opening of the GroEL channel. In Francisella tularensis subsp. holarctica (strain FTNF002-00 / FTA), this protein is Co-chaperonin GroES.